A 387-amino-acid polypeptide reads, in one-letter code: Phosphoglycerate kinase (387 aa).

Substrate is bound by residues 21-23 (DLN), arginine 36, 59-62 (HLGR), arginine 113, and arginine 146. ATP is bound by residues lysine 197, glutamate 314, and 340 to 343 (GGDT).

It belongs to the phosphoglycerate kinase family. In terms of assembly, monomer.

The protein resides in the cytoplasm. The catalysed reaction is (2R)-3-phosphoglycerate + ATP = (2R)-3-phospho-glyceroyl phosphate + ADP. It participates in carbohydrate degradation; glycolysis; pyruvate from D-glyceraldehyde 3-phosphate: step 2/5. This Photorhabdus luminescens (Xenorhabdus luminescens) protein is Phosphoglycerate kinase.